Reading from the N-terminus, the 316-residue chain is Ribosomal RNA small subunit methyltransferase H (316 aa).

Residues 35 to 37, aspartate 55, phenylalanine 79, aspartate 101, and glutamine 108 contribute to the S-adenosyl-L-methionine site; that span reads GGH. The disordered stretch occupies residues 291–316; sequence ALKPSDQEVELNPRSRSSVLRVAEKL.

Belongs to the methyltransferase superfamily. RsmH family.

The protein resides in the cytoplasm. It catalyses the reaction cytidine(1402) in 16S rRNA + S-adenosyl-L-methionine = N(4)-methylcytidine(1402) in 16S rRNA + S-adenosyl-L-homocysteine + H(+). Specifically methylates the N4 position of cytidine in position 1402 (C1402) of 16S rRNA. The chain is Ribosomal RNA small subunit methyltransferase H from Vibrio cholerae serotype O1 (strain ATCC 39315 / El Tor Inaba N16961).